The following is a 299-amino-acid chain: Putative ammonium transporter 4 member 1 (299 aa).

A run of 5 helical transmembrane segments spans residues Ala16–Leu36, Val59–Gly79, Leu104–Val124, Val158–Leu178, and Ala218–Val238.

The protein belongs to the ammonia transporter channel (TC 1.A.11.2) family.

The protein localises to the membrane. This is Putative ammonium transporter 4 member 1 (AMT4-1) from Oryza sativa subsp. japonica (Rice).